A 413-amino-acid chain; its full sequence is Glucose-1-phosphate adenylyltransferase (413 aa).

Residues Y102, G167, 182–183, and S200 contribute to the alpha-D-glucose 1-phosphate site; that span reads EK.

It belongs to the bacterial/plant glucose-1-phosphate adenylyltransferase family. Homotetramer.

It carries out the reaction alpha-D-glucose 1-phosphate + ATP + H(+) = ADP-alpha-D-glucose + diphosphate. It functions in the pathway glycan biosynthesis; glycogen biosynthesis. In terms of biological role, involved in the biosynthesis of ADP-glucose, a building block required for the elongation reactions to produce glycogen. Catalyzes the reaction between ATP and alpha-D-glucose 1-phosphate (G1P) to produce pyrophosphate and ADP-Glc. In Deinococcus geothermalis (strain DSM 11300 / CIP 105573 / AG-3a), this protein is Glucose-1-phosphate adenylyltransferase.